The following is a 359-amino-acid chain: E3 ubiquitin-protein ligase RNF146 (359 aa).

An RING-type zinc finger spans residues 37–75 (CAICLQTCVHPVSLPCKHVFCYLCVKGASWLGKRCALCR). Residues Lys85 and Lys95 each participate in a glycyl lysine isopeptide (Lys-Gly) (interchain with G-Cter in ubiquitin) cross-link. A WWE domain is found at 92 to 168 (EELKAASRGN…EHGRRRKIKR (77 aa)). Positions 108, 111, and 115 each coordinate a glycoprotein. A Glycyl lysine isopeptide (Lys-Gly) (interchain with G-Cter in ubiquitin) cross-link involves residue Lys131. Residues Tyr145, Gln154, Arg164, and Lys176 each contribute to the a glycoprotein site. A Glycyl lysine isopeptide (Lys-Gly) (interchain with G-Cter in ubiquitin) cross-link involves residue Lys176. Residues 254-359 (GDNTAERSHR…PDGQCTVTEV (106 aa)) are disordered. Over residues 284 to 298 (SIEETESDASSDSED) the composition is skewed to acidic residues. 2 positions are modified to phosphoserine: Ser290 and Ser294. Polar residues predominate over residues 306-323 (HSLTQQRLLVSNANQTVP).

As to quaternary structure, can form homooligomers. Interacts with PARsylated AXIN1, AXIN2, BLZF1, CASC3, H1-2, IPO7, LIG3, NCL, PARP1, XRCC1, XRCC5 and XRCC6. Interacts with DDB1, DHX15, IQGAP1, LRPPRC, PARP2, PRKDC, RUVBL2, TNKS1 and TNKS2. Binding often leads to interactor ubiquitination, in the presence of the appropriate E1 and E2 enzymes, and proteasomal degradation. Ubiquitinated; autoubiquitinated. Polyubiquitinated in the presence of UBE2D1, UBE2D2 and UBE2D3. Multimonoubiquitinated in the presence of UBE2E1. Not ubiquitinated in the presence of UBE2H, CDC34, UBE2L3, UBE2L6, nor UBE2C. In the absence of PAR, autoubiquitination occurs on Lys-85, Lys-95 and Lys-176 via 'Lys-11' and 'Lys-48' ubiquitin linkages. In the presence of PAR, Lys-131 and Lys-176 are ubiquitinated via 'Lys-6', 'Lys-33' and 'Lys-48' ubiquitin linkages. Autoubiquitination is enhanced upon PAR-binding. Ubiquitously expressed. Up-regulated in brains from patients with Alzheimer disease.

It is found in the cytoplasm. It localises to the cytosol. The protein localises to the nucleus. It catalyses the reaction S-ubiquitinyl-[E2 ubiquitin-conjugating enzyme]-L-cysteine + [acceptor protein]-L-lysine = [E2 ubiquitin-conjugating enzyme]-L-cysteine + N(6)-ubiquitinyl-[acceptor protein]-L-lysine.. The protein operates within protein modification; protein ubiquitination. Its function is as follows. E3 ubiquitin-protein ligase that specifically binds poly-ADP-ribosylated (PARsylated) proteins and mediates their ubiquitination and subsequent degradation. May regulate many important biological processes, such as cell survival and DNA damage response. Acts as an activator of the Wnt signaling pathway by mediating the ubiquitination of PARsylated AXIN1 and AXIN2, 2 key components of the beta-catenin destruction complex. Acts in cooperation with tankyrase proteins (TNKS and TNKS2), which mediate PARsylation of target proteins AXIN1, AXIN2, BLZF1, CASC3, TNKS and TNKS2. Recognizes and binds tankyrase-dependent PARsylated proteins via its WWE domain and mediates their ubiquitination, leading to their degradation. Different ubiquitin linkage types have been observed: TNKS2 undergoes ubiquitination at 'Lys-48' and 'Lys-63', while AXIN1 is only ubiquitinated at 'Lys-48'. May regulate TNKS and TNKS2 subcellular location, preventing aggregation at a centrosomal location. Neuroprotective protein. Protects the brain against N-methyl-D-aspartate (NMDA) receptor-mediated glutamate excitotoxicity and ischemia, by interfering with PAR-induced cell death, called parthanatos. Prevents nuclear translocation of AIFM1 in a PAR-binding dependent manner. Does not affect PARP1 activation. Protects against cell death induced by DNA damaging agents, such as N-methyl-N-nitro-N-nitrosoguanidine (MNNG) and rescues cells from G1 arrest. Promotes cell survival after gamma-irradiation. Facilitates DNA repair. The chain is E3 ubiquitin-protein ligase RNF146 (RNF146) from Homo sapiens (Human).